A 460-amino-acid polypeptide reads, in one-letter code: MKLWGGRFSKNTAALVDQFNASIEFDQKLYKYDIAGSVAHAKMLAHANIITKQESQLIVEGLQSILADIEAGKVEFQLELEDIHMNIETLLIDSIGEVGKKLHTARSRNDQVAVDIRLYLREEILEICELIKQLLITFTDIAEKHVDTIMPGYTHLQRAQAVTLGHHFMAYFQMFKRDHERLLDCYKRVNVMPLGAGALAGTTYATDRVFLAKELGFDAICENSLDAVSDRDFIIEFNNTASIIMMHLSRFCEELIIWNTAEFGFIEMDDAYSTGSSIMPQKKNPDLAELIRGKTGRVYGNQVNIMTMMKALPLAYNKDMQEDKIPLFDTVDNVKGCLEIFNEMIKSTTFKKENMKKATKEGFMNATDVADYLVKKGVPFRSAHEIVGKMVLHCVQTSKTIEDLTLDEFQNFSPTFTEDILEVIQIENCVASKISQGSTSPTNVLIMVNQARVFIEEVLS.

Belongs to the lyase 1 family. Argininosuccinate lyase subfamily.

It is found in the cytoplasm. The catalysed reaction is 2-(N(omega)-L-arginino)succinate = fumarate + L-arginine. Its pathway is amino-acid biosynthesis; L-arginine biosynthesis; L-arginine from L-ornithine and carbamoyl phosphate: step 3/3. The sequence is that of Argininosuccinate lyase from Alkaliphilus metalliredigens (strain QYMF).